Reading from the N-terminus, the 481-residue chain is Aspartyl/glutamyl-tRNA(Asn/Gln) amidotransferase subunit B (481 aa).

Belongs to the GatB/GatE family. GatB subfamily. Heterotrimer of A, B and C subunits.

It catalyses the reaction L-glutamyl-tRNA(Gln) + L-glutamine + ATP + H2O = L-glutaminyl-tRNA(Gln) + L-glutamate + ADP + phosphate + H(+). It carries out the reaction L-aspartyl-tRNA(Asn) + L-glutamine + ATP + H2O = L-asparaginyl-tRNA(Asn) + L-glutamate + ADP + phosphate + 2 H(+). Allows the formation of correctly charged Asn-tRNA(Asn) or Gln-tRNA(Gln) through the transamidation of misacylated Asp-tRNA(Asn) or Glu-tRNA(Gln) in organisms which lack either or both of asparaginyl-tRNA or glutaminyl-tRNA synthetases. The reaction takes place in the presence of glutamine and ATP through an activated phospho-Asp-tRNA(Asn) or phospho-Glu-tRNA(Gln). The chain is Aspartyl/glutamyl-tRNA(Asn/Gln) amidotransferase subunit B from Fusobacterium nucleatum subsp. nucleatum (strain ATCC 25586 / DSM 15643 / BCRC 10681 / CIP 101130 / JCM 8532 / KCTC 2640 / LMG 13131 / VPI 4355).